The chain runs to 457 residues: UDP-glycosyltransferase 72C1 (457 aa).

Residues Ser272, 343–344 (WA), 361–369 (HCGWNSVLE), and 383–386 (YSEQ) each bind UDP-alpha-D-glucose.

The protein belongs to the UDP-glycosyltransferase family.

This is UDP-glycosyltransferase 72C1 (UGT72C1) from Arabidopsis thaliana (Mouse-ear cress).